The following is a 427-amino-acid chain: 2-oxoglutarate and iron-dependent oxygenase JMJD4 (427 aa).

Positions 147-306 (SLVNDLEDIF…NMWHFLQQEL (160 aa)) constitute a JmjC domain. Fe cation contacts are provided by His194, Asp196, and His274.

The protein belongs to the JMJD6 family. As to quaternary structure, interacts with ETF1. Interacts with the ETF1-GSPT1 complex. Requires Fe(2+) as cofactor.

It localises to the cytoplasm. The enzyme catalyses L-lysyl-[protein] + 2-oxoglutarate + O2 = 4-hydroxy-L-lysyl-[protein] + succinate + CO2. Functionally, catalyzes the 2-oxoglutarate and iron-dependent C4-lysyl hydroxylation of ETF1 at 'Lys-63' thereby promoting the translational termination efficiency of ETF1. Not essential for embryonic stem cell (ESC) maintenance and the embryonic and postnatal development. The polypeptide is 2-oxoglutarate and iron-dependent oxygenase JMJD4 (Jmjd4) (Mus musculus (Mouse)).